Reading from the N-terminus, the 200-residue chain is Flavin prenyltransferase UbiX (200 aa).

FMN-binding positions include 15–17 (GAS), T41, 102–105 (SMGT), and R137. Dimethylallyl phosphate-binding residues include Y167 and K183.

This sequence belongs to the UbiX/PAD1 family.

It carries out the reaction dimethylallyl phosphate + FMNH2 = prenylated FMNH2 + phosphate. Its function is as follows. Flavin prenyltransferase that catalyzes the synthesis of the prenylated FMN cofactor (prenyl-FMN) for 4-hydroxy-3-polyprenylbenzoic acid decarboxylase UbiD. The prenyltransferase is metal-independent and links a dimethylallyl moiety from dimethylallyl monophosphate (DMAP) to the flavin N5 and C6 atoms of FMN. The sequence is that of Flavin prenyltransferase UbiX from Alkalihalophilus pseudofirmus (strain ATCC BAA-2126 / JCM 17055 / OF4) (Bacillus pseudofirmus).